Consider the following 39-residue polypeptide: Cytochrome b559 subunit beta (39 aa).

A helical transmembrane segment spans residues 14-30 (WLAVHGLAVPTVFFLGS). Histidine 18 serves as a coordination point for heme.

It belongs to the PsbE/PsbF family. As to quaternary structure, heterodimer of an alpha subunit and a beta subunit. PSII is composed of 1 copy each of membrane proteins PsbA, PsbB, PsbC, PsbD, PsbE, PsbF, PsbH, PsbI, PsbJ, PsbK, PsbL, PsbM, PsbT, PsbX, PsbY, PsbZ, Psb30/Ycf12, at least 3 peripheral proteins of the oxygen-evolving complex and a large number of cofactors. It forms dimeric complexes. The cofactor is heme b.

It is found in the plastid. The protein resides in the chloroplast thylakoid membrane. This b-type cytochrome is tightly associated with the reaction center of photosystem II (PSII). PSII is a light-driven water:plastoquinone oxidoreductase that uses light energy to abstract electrons from H(2)O, generating O(2) and a proton gradient subsequently used for ATP formation. It consists of a core antenna complex that captures photons, and an electron transfer chain that converts photonic excitation into a charge separation. This is Cytochrome b559 subunit beta from Nicotiana glutinosa (Tobacco).